A 910-amino-acid chain; its full sequence is Protein translocase subunit SecA (910 aa).

Residues Gln-87, 105 to 109 (GEGKT), and Asp-512 contribute to the ATP site. Composition is skewed to basic and acidic residues over residues 561–571 (RHESRRIDNQL), 841–853 (EEERRQQAEELAR), and 880–890 (TFEREARKVGR). Disordered stretches follow at residues 561–584 (RHESRRIDNQLRGRSGRQGDAGSS) and 835–910 (EEVD…GKIN). 4 residues coordinate Zn(2+): Cys-894, Cys-896, Cys-905, and His-906. Residues 900–910 (KKYKQCHGKIN) show a composition bias toward basic residues.

Belongs to the SecA family. In terms of assembly, monomer and homodimer. Part of the essential Sec protein translocation apparatus which comprises SecA, SecYEG and auxiliary proteins SecDF-YajC and YidC. Zn(2+) is required as a cofactor.

Its subcellular location is the cell inner membrane. The protein localises to the cytoplasm. It carries out the reaction ATP + H2O + cellular proteinSide 1 = ADP + phosphate + cellular proteinSide 2.. Functionally, part of the Sec protein translocase complex. Interacts with the SecYEG preprotein conducting channel. Has a central role in coupling the hydrolysis of ATP to the transfer of proteins into and across the cell membrane, serving both as a receptor for the preprotein-SecB complex and as an ATP-driven molecular motor driving the stepwise translocation of polypeptide chains across the membrane. The chain is Protein translocase subunit SecA from Photobacterium profundum (strain SS9).